Reading from the N-terminus, the 115-residue chain is HTH-type transcriptional regulator SarR (115 aa).

A DNA-binding region (H-T-H motif) is located at residues 51 to 74 (SKEIAKCSEFKPYYLTKALQKLKD).

This sequence belongs to the SarA family. In terms of assembly, homodimer.

It localises to the cytoplasm. In terms of biological role, negative regulator of sarA transcription at late exponential and stationary growth phases. It contributes to the modulation of target genes downstream of the sarA regulatory cascade. Also, positively regulates expression of primary transcripts RNAII and RNAIII generated by agr (virulence accessory gene regulator) locus. This Staphylococcus aureus (strain NCTC 8325 / PS 47) protein is HTH-type transcriptional regulator SarR (sarR).